Here is a 207-residue protein sequence, read N- to C-terminus: PITH domain-containing protein P35G2.02 (207 aa).

A PITH domain is found at Glu13–Pro189.

It belongs to the PITHD1 family.

The protein localises to the cytoplasm. The protein resides in the nucleus. The protein is PITH domain-containing protein P35G2.02 of Schizosaccharomyces pombe (strain 972 / ATCC 24843) (Fission yeast).